A 311-amino-acid polypeptide reads, in one-letter code: Heme A synthase (311 aa).

Topologically, residues 1–6 (MQRFIK) are cytoplasmic. The helical transmembrane segment at 7–27 (WLAVITSLDLLIVLLGGALVT) threads the bilayer. At 28 to 62 (KTGSGQGCGKSWPLCNGEFVPSNLSMETIIELSHR) the chain is on the extracellular side. Cysteine 35 and cysteine 42 are joined by a disulfide. The active site involves glutamate 58. Histidine 61 contacts heme o. Residues 63–83 (LTSGSAGILVTLLCILSWKYY) form a helical membrane-spanning segment. Over 84 to 91 (KHVRETKT) the chain is Cytoplasmic. Residues 92-112 (LAILSFVFLVAQALMGAAAVV) form a helical membrane-spanning segment. Topologically, residues 113–121 (WGQMPAVLA) are extracellular. A helical membrane pass occupies residues 122–142 (IHFGISLISFASVILLTCLIF). Histidine 123 is a binding site for heme o. Topologically, residues 143 to 159 (EIDQKFDARSLIMDKKM) are cytoplasmic. Residues 160-180 (KFHIYGVTIYSYIVVYTGALV) form a helical membrane-spanning segment. At 181–211 (RHERASLACPDFPLCSKNRPMPTQLHEWVQM) the chain is on the extracellular side. Cysteines 189 and 195 form a disulfide. Residues 212–232 (GHRVAAMLIFAWILYAMILAI) form a helical membrane-spanning segment. A heme b-binding site is contributed by histidine 213. Topologically, residues 233 to 243 (RHYKQQPVVYW) are cytoplasmic. A helical transmembrane segment spans residues 244–264 (GWIISFILVTLQAVVGVLVVF). Residues 265 to 271 (TNASLAM) are Extracellular-facing. The chain crosses the membrane as a helical span at residues 272-292 (ALLHSLFISCLFAVLCYLVML). Histidine 275 lines the heme b pocket. At 293-311 (GTRSKVNAKEAELTSKQTK) the chain is on the cytoplasmic side.

The protein belongs to the COX15/CtaA family. Type 1 subfamily. Interacts with CtaB. The cofactor is heme b.

Its subcellular location is the cell membrane. The catalysed reaction is Fe(II)-heme o + 2 A + H2O = Fe(II)-heme a + 2 AH2. It participates in porphyrin-containing compound metabolism; heme A biosynthesis; heme A from heme O: step 1/1. Functionally, catalyzes the conversion of heme O to heme A by two successive hydroxylations of the methyl group at C8. The first hydroxylation forms heme I, the second hydroxylation results in an unstable dihydroxymethyl group, which spontaneously dehydrates, resulting in the formyl group of heme A. The sequence is that of Heme A synthase from Bacillus cereus (strain ATCC 14579 / DSM 31 / CCUG 7414 / JCM 2152 / NBRC 15305 / NCIMB 9373 / NCTC 2599 / NRRL B-3711).